Reading from the N-terminus, the 483-residue chain is Protein disulfide-isomerase 5-3 (483 aa).

N-linked (GlcNAc...) asparagine glycosylation is found at N53, N74, and N99. Positions 133-263 (EETKEEFPDG…IVKMVEGLVA (131 aa)) constitute a Thioredoxin domain. C170 (nucleophile) is an active-site residue. N-linked (GlcNAc...) asparagine glycosylation is found at N279, N326, and N376. The helical transmembrane segment at 442–462 (FSHFITNLCAIIGGVFTVAGI) threads the bilayer.

This sequence belongs to the protein disulfide isomerase family. Widely expressed.

The protein resides in the membrane. Functionally, acts as a protein-folding catalyst that interacts with nascent polypeptides to catalyze the formation, isomerization, and reduction or oxidation of disulfide bonds. The chain is Protein disulfide-isomerase 5-3 (PDIL5-3) from Arabidopsis thaliana (Mouse-ear cress).